A 211-amino-acid chain; its full sequence is Uridine kinase (211 aa).

13 to 20 (GGSGSGKT) is a binding site for ATP.

The protein belongs to the uridine kinase family.

It is found in the cytoplasm. The catalysed reaction is uridine + ATP = UMP + ADP + H(+). It carries out the reaction cytidine + ATP = CMP + ADP + H(+). The protein operates within pyrimidine metabolism; CTP biosynthesis via salvage pathway; CTP from cytidine: step 1/3. Its pathway is pyrimidine metabolism; UMP biosynthesis via salvage pathway; UMP from uridine: step 1/1. In Lactobacillus johnsonii (strain CNCM I-12250 / La1 / NCC 533), this protein is Uridine kinase.